Reading from the N-terminus, the 596-residue chain is UvrABC system protein C (596 aa).

In terms of domain architecture, GIY-YIG spans 14–91 (DQPGCYLMKD…IKLHDPKYNV (78 aa)). The UVR domain maps to 196 to 231 (EAVKKELEVKMLAAAENLEFERAKEFRDQIAHIDTV).

This sequence belongs to the UvrC family. As to quaternary structure, interacts with UvrB in an incision complex.

It localises to the cytoplasm. The UvrABC repair system catalyzes the recognition and processing of DNA lesions. UvrC both incises the 5' and 3' sides of the lesion. The N-terminal half is responsible for the 3' incision and the C-terminal half is responsible for the 5' incision. The polypeptide is UvrABC system protein C (Lysinibacillus sphaericus (strain C3-41)).